Consider the following 430-residue polypeptide: Adenylosuccinate synthetase (430 aa).

Residues 12–18 (GDEGKGK) and 40–42 (GHT) each bind GTP. Asp13 serves as the catalytic Proton acceptor. Positions 13 and 40 each coordinate Mg(2+). IMP is bound by residues 13 to 16 (DEGK), 38 to 41 (NAGH), Thr130, Arg144, Gln224, Thr239, and Arg303. Catalysis depends on His41, which acts as the Proton donor. 299–305 (TNTGRPR) serves as a coordination point for substrate. GTP contacts are provided by residues Arg305, 331–333 (KLD), and 413–415 (STS).

The protein belongs to the adenylosuccinate synthetase family. As to quaternary structure, homodimer. Requires Mg(2+) as cofactor.

Its subcellular location is the cytoplasm. The enzyme catalyses IMP + L-aspartate + GTP = N(6)-(1,2-dicarboxyethyl)-AMP + GDP + phosphate + 2 H(+). Its pathway is purine metabolism; AMP biosynthesis via de novo pathway; AMP from IMP: step 1/2. Functionally, plays an important role in the de novo pathway of purine nucleotide biosynthesis. Catalyzes the first committed step in the biosynthesis of AMP from IMP. The protein is Adenylosuccinate synthetase of Rhodopseudomonas palustris (strain HaA2).